The following is a 308-amino-acid chain: Bifunctional protein FolD (308 aa).

NADP(+) contacts are provided by residues G175 to S177, S200, and I241.

The protein belongs to the tetrahydrofolate dehydrogenase/cyclohydrolase family. Homodimer.

The catalysed reaction is (6R)-5,10-methylene-5,6,7,8-tetrahydrofolate + NADP(+) = (6R)-5,10-methenyltetrahydrofolate + NADPH. It catalyses the reaction (6R)-5,10-methenyltetrahydrofolate + H2O = (6R)-10-formyltetrahydrofolate + H(+). It functions in the pathway one-carbon metabolism; tetrahydrofolate interconversion. Catalyzes the oxidation of 5,10-methylenetetrahydrofolate to 5,10-methenyltetrahydrofolate and then the hydrolysis of 5,10-methenyltetrahydrofolate to 10-formyltetrahydrofolate. The protein is Bifunctional protein FolD of Jannaschia sp. (strain CCS1).